The chain runs to 821 residues: MAESGGGGGCCPPMDLMRSETMQLVQLIVPMESAHLTVSYLGDLGLVQFKDLNSEKSPFQRTYAAQIKRCGEMARKIRFFRDQMSKAGVPAKEMQGKENDIDLDDVEVKLGELEAELVEINANNDKLQRSYNELMEYKLVLQKAGEFFSSAHRSAADQQRETESQQAGEDLLESPLLQEEKSIDSTKQVKLGFLTGLVPREKSMVFERILFRATRGNIFIRQTVIEEPVIDPNSGEKAEKNVFVVFYSGERAKSKILKICEAFGANRYPFSEDLGRQAQMITEVSGRLSELKTTIDAGLGQRNILLQTIGDKFELWNLKVRKEKAIYHTLNMLSLDVTKKCLVAEGWSPVFASREIQDALQRAAVDSNSQVGSIFQVLRTKESPPTYFRTNKFTSAIQEIVDAYGVAKYQEANPGVFTIVTFPFLFAVMFGDWGHGICILLATMYLILKEKKLASQKLGDIMEMAFGGRYVILMMSLFSIYTGLIYNEFFSIPFPLFAPSAYDCRDVSCSEATTIGLIKVRDTYPFGLDPVWHGSRSELPFLNSLKMKMSILLGVSQMNLGIIMSYFNARFFKSSVNIWFQFIPQMIFLNSLFGYLSVLIIIKWCTGSQADLYHVMIYMFLSPMDELGENQLFPHQKTLQLVLLFLALVSVPCMLLPKPFILKKQHEARHQGQAYAPLDETDESLHVETNGGGSHGHEEFEFSEIFVHQLIHTIEFVLGAVSNTASYLRLWALSLAHSELSSVFYEKVLLLAWGYNNPLILIVGVLVFIFATVGVLLVMETLSAFLHALRLHWVEFQNKFYEGDGYKFAPFTFIFTANEDE.

Alanine 2 carries the post-translational modification N-acetylalanine. Residues 2 to 421 (AESGGGGGCC…ANPGVFTIVT (420 aa)) lie on the Cytoplasmic side of the membrane. The stretch at 97-144 (KENDIDLDDVEVKLGELEAELVEINANNDKLQRSYNELMEYKLVLQKA) forms a coiled coil. Residue serine 174 is modified to Phosphoserine. Residues 422–442 (FPFLFAVMFGDWGHGICILLA) traverse the membrane as a helical segment. Residues 443 to 469 (TMYLILKEKKLASQKLGDIMEMAFGGR) are Vacuolar-facing. Residues 470–490 (YVILMMSLFSIYTGLIYNEFF) traverse the membrane as a helical segment. At 491 to 548 (SIPFPLFAPSAYDCRDVSCSEATTIGLIKVRDTYPFGLDPVWHGSRSELPFLNSLKMK) the chain is on the cytoplasmic side. The helical transmembrane segment at 549–569 (MSILLGVSQMNLGIIMSYFNA) threads the bilayer. The Vacuolar portion of the chain corresponds to 570-581 (RFFKSSVNIWFQ). The chain crosses the membrane as a helical span at residues 582 to 602 (FIPQMIFLNSLFGYLSVLIII). Residues 603-640 (KWCTGSQADLYHVMIYMFLSPMDELGENQLFPHQKTLQ) lie on the Cytoplasmic side of the membrane. A helical membrane pass occupies residues 641–661 (LVLLFLALVSVPCMLLPKPFI). At 662-758 (LKKQHEARHQ…LLLAWGYNNP (97 aa)) the chain is on the vacuolar side. The chain crosses the membrane as a helical span at residues 759–779 (LILIVGVLVFIFATVGVLLVM). Over 780-821 (ETLSAFLHALRLHWVEFQNKFYEGDGYKFAPFTFIFTANEDE) the chain is Cytoplasmic.

It belongs to the V-ATPase 116 kDa subunit family. V-ATPase is a heteromultimeric enzyme composed of a peripheral catalytic V1 complex (components A to H) attached to an integral membrane V0 proton pore complex (components: a, c, c'', d and e). As to expression, expressed in etiolated seedlings hypocotyls.

It is found in the vacuole membrane. Its function is as follows. Essential component of the vacuolar proton pump (V-ATPase), a multimeric enzyme that catalyzes the translocation of protons across the membranes. Required for assembly and activity of the V-ATPase. Involved in vacuolar nutrient storage (e.g. accumulation and storage of nitrate) and in tolerance to some toxic ions (e.g. zinc ions sequestration in vacuoles). This chain is V-type proton ATPase subunit a3 (VHA-a3), found in Arabidopsis thaliana (Mouse-ear cress).